A 626-amino-acid polypeptide reads, in one-letter code: MRTSVLRQAGLCRAALAARHLQISSKPSAALLSQVTRAIAVQSLPSASLPRFYSAEATAQSNTAASNGLVTRFADLAALGVHENVVRAITHGMGYENMTEVQSMTISPALKGKDIVAQAKTGTGKTLGFLVPVIQKIITQDPDLAHRFGGKRARSDDIRAIIISPTRELAEQIGEEARKLVKGTGIIVQTAVGGTQKNAMLYKTRQQGCHILVGTPGRLNDLLSDSHSGIDAPRLSTLVLDEADRMLEVGFNEELRQIINYLPDRKVLPRQTLLYSATIPKDVVGLARSYIDKNNFEFVQTVKADEVLTHDRIPQYIVPCKGFENIYPAMLELIEKALNESRTNPEALPFKAIVFLPTTAEVIMANAIFKRLQWKFKHIPKTWDIHSKLTQNARTRAADEFKNARTGILFSSDVTARGMDFPNVSHVIQTHIPPNREQYIHRLGRTGRANKPGQGWLIVPDIELHAARSRLPGLPIKRNDELECASVNAADSGADKHANFQHILDAASRLPEDLFKDCYSSYLGGALQGIDRQALVYALNDLAKFGWGLEEPPAVRQSIMKHMGRVQGLRVETREHSMRPMGSGPGHRRDFNSRGPRRQSDDPFENALHRAQDLDRRPTRRQQASF.

Residues 74-103 (ADLAALGVHENVVRAITHGMGYENMTEVQS) carry the Q motif motif. Residues 106 to 297 (ISPALKGKDI…RSYIDKNNFE (192 aa)) enclose the Helicase ATP-binding domain. Position 119–126 (119–126 (AKTGTGKT)) interacts with ATP. A DEAD box motif is present at residues 241–244 (DEAD). One can recognise a Helicase C-terminal domain in the interval 329-493 (AMLELIEKAL…CASVNAADSG (165 aa)). The tract at residues 569 to 626 (LRVETREHSMRPMGSGPGHRRDFNSRGPRRQSDDPFENALHRAQDLDRRPTRRQQASF) is disordered. The tract at residues 578 to 626 (MRPMGSGPGHRRDFNSRGPRRQSDDPFENALHRAQDLDRRPTRRQQASF) is RNA-binding. Residues 607–617 (ALHRAQDLDRR) show a composition bias toward basic and acidic residues.

It belongs to the DEAD box helicase family.

It localises to the mitochondrion matrix. It catalyses the reaction ATP + H2O = ADP + phosphate + H(+). Activated by exposed helices in a group I intron RNA. Acts as an RNA chaperone to resolve non-native structures formed during RNA folding to promote mitochondrial group I, but also group II, intron splicing. Functions predominantly by disrupting accessible RNA secondary structure and depends on spontaneous openings in tightly packed RNAs to gain access to RNA helices. The polypeptide is ATP-dependent RNA helicase cyt-19, mitochondrial (Neurospora crassa (strain ATCC 24698 / 74-OR23-1A / CBS 708.71 / DSM 1257 / FGSC 987)).